Consider the following 336-residue polypeptide: Tryptophan--tRNA ligase (336 aa).

ATP is bound by residues 11–13 (TTT) and 19–20 (GN). Positions 12-20 (TTGIPHLGN) match the 'HIGH' region motif. Position 145 (Asp-145) interacts with L-tryptophan. ATP-binding positions include 157–159 (GRD), Leu-196, and 203–207 (KMSKS). The 'KMSKS' region signature appears at 203 to 207 (KMSKS).

The protein belongs to the class-I aminoacyl-tRNA synthetase family. Homodimer.

Its subcellular location is the cytoplasm. The catalysed reaction is tRNA(Trp) + L-tryptophan + ATP = L-tryptophyl-tRNA(Trp) + AMP + diphosphate + H(+). In terms of biological role, catalyzes the attachment of tryptophan to tRNA(Trp). This is Tryptophan--tRNA ligase from Neisseria meningitidis serogroup A / serotype 4A (strain DSM 15465 / Z2491).